Here is a 195-residue protein sequence, read N- to C-terminus: Pyruvoyl-dependent arginine decarboxylase AaxB (195 aa).

S53 is subject to Pyruvic acid (Ser).

Belongs to the pyruvoyl-dependent arginine decarboxylase family. Trimer of an alpha-beta dimer. Pyruvate is required as a cofactor.

It is found in the cytoplasm. It carries out the reaction L-arginine + H(+) = agmatine + CO2. Functionally, part of the AaxABC system, catalyzes the decarboxylation of L-arginine. The arginine uptake by the bacterium in the macrophage may be a virulence factor against the host innate immune response. The sequence is that of Pyruvoyl-dependent arginine decarboxylase AaxB (aaxB) from Chlamydia trachomatis serovar L2 (strain ATCC VR-902B / DSM 19102 / 434/Bu).